We begin with the raw amino-acid sequence, 267 residues long: Exodeoxyribonuclease III (267 aa).

Glu34 lines the Mg(2+) pocket. The active site involves Tyr109. 3 residues coordinate Mg(2+): Asp151, Asn153, and Asp258. Catalysis depends on Asp151, which acts as the Proton donor/acceptor.

This sequence belongs to the DNA repair enzymes AP/ExoA family. In terms of assembly, monomer. It depends on Mg(2+) as a cofactor. Mn(2+) is required as a cofactor.

It catalyses the reaction Exonucleolytic cleavage in the 3'- to 5'-direction to yield nucleoside 5'-phosphates.. Its function is as follows. Major apurinic-apyrimidinic endonuclease of E.coli. It removes the damaged DNA at cytosines and guanines by cleaving on the 3'-side of the AP site by a beta-elimination reaction. The chain is Exodeoxyribonuclease III (xthA) from Haemophilus influenzae (strain ATCC 51907 / DSM 11121 / KW20 / Rd).